Consider the following 387-residue polypeptide: MTSHPVFIDLSLDEQVQELRKYFKKLGAEISSEKSNKGVEDDLHKIIGVCDVCFKDGEPAQIDGILNSIVSIMITIPLDRGENIVLAYCEKMTKAPNQPLAKVCLQSLWRLFNNLDTASPLRYHVYYHLVQVAKQCDQVLEVFTGVDQLKSQFANCPPSSEQMQKLYRLLHDVTKDTNLERSSKVMIELLGTYTADNACVAREDAMKCIVTALADPNTFLLDPLLSLKPVRFLEGDLIHDLLSIFVSEKLPAYVEFYEEHKEFVNSQGLNHEQNMKKMRLLTFMQLAESNAEMSFEALTKELQITENEVEPFVIEVLKTKLVRARLDQANRKVHISSTMHRTFGAPQWEQLRDLLQAWKENLSSVREGLTNVASAQLDLARSQKLIH.

A PCI domain is found at Arg181 to His340.

This sequence belongs to the eIF-3 subunit M family. Component of the eukaryotic translation initiation factor 3 (eIF-3) complex. The eIF-3 complex interacts with pix.

It localises to the cytoplasm. The protein localises to the golgi apparatus. In terms of biological role, component of the eukaryotic translation initiation factor 3 (eIF-3) complex, which is involved in protein synthesis of a specialized repertoire of mRNAs and, together with other initiation factors, stimulates binding of mRNA and methionyl-tRNAi to the 40S ribosome. The eIF-3 complex specifically targets and initiates translation of a subset of mRNAs involved in cell proliferation. The chain is Eukaryotic translation initiation factor 3 subunit M from Drosophila willistoni (Fruit fly).